Here is a 356-residue protein sequence, read N- to C-terminus: Malate dehydrogenase, glyoxysomal (356 aa).

A glyoxysome-targeting transit peptide spans 1-36; it reads MQPIPDVNQRIARISAHLHPPKSQMEESSALRRANC. NAD(+) contacts are provided by residues 51 to 57 and D77; that span reads GAAGGIG. Residues R124 and R130 each coordinate substrate. NAD(+) is bound by residues N137 and 160 to 162; that span reads ISN. Substrate is bound by residues N162 and R196. The active-site Proton acceptor is the H220. Residue M271 participates in NAD(+) binding.

This sequence belongs to the LDH/MDH superfamily. MDH type 1 family. In terms of assembly, homodimer.

The protein localises to the glyoxysome. The catalysed reaction is (S)-malate + NAD(+) = oxaloacetate + NADH + H(+). This chain is Malate dehydrogenase, glyoxysomal, found in Citrullus lanatus (Watermelon).